Reading from the N-terminus, the 376-residue chain is F-box/kelch-repeat protein At1g67480 (376 aa).

An F-box domain is found at aspartate 37–leucine 85. 4 Kelch repeats span residues lysine 139 to glycine 189, histidine 190 to glycine 237, leucine 239 to isoleucine 289, and tryptophan 291 to serine 335.

The protein is F-box/kelch-repeat protein At1g67480 of Arabidopsis thaliana (Mouse-ear cress).